The following is a 362-amino-acid chain: Chalcone synthase A (362 aa).

C168 is a catalytic residue.

This sequence belongs to the thiolase-like superfamily. Chalcone/stilbene synthases family.

It catalyses the reaction (E)-4-coumaroyl-CoA + 3 malonyl-CoA + 3 H(+) = 2',4,4',6'-tetrahydroxychalcone + 3 CO2 + 4 CoA. The protein operates within secondary metabolite biosynthesis; flavonoid biosynthesis. Its function is as follows. The primary product of this enzyme is 4,2',4',6'-tetrahydroxychalcone (also termed naringenin-chalcone or chalcone) which can under specific conditions spontaneously isomerize into naringenin. This is Chalcone synthase A (CHSA) from Ipomoea triloba (Trilobed morning glory).